A 537-amino-acid chain; its full sequence is CTP synthase (537 aa).

The segment at 1-267 (MTKYIFVTGG…DQIVLDHFDV (267 aa)) is amidoligase domain. Ser13 contacts CTP. Ser13 contributes to the UTP binding site. Residue 14-19 (SIGKGI) participates in ATP binding. L-glutamine is bound at residue Tyr54. Residue Asp71 coordinates ATP. Residues Asp71 and Glu141 each coordinate Mg(2+). Residues 148 to 150 (DIE), 188 to 193 (KTKPTQ), and Lys224 each bind CTP. UTP contacts are provided by residues 188 to 193 (KTKPTQ) and Lys224. Residues 292-535 (KIALVGKYVA…IDAANQTGKV (244 aa)) enclose the Glutamine amidotransferase type-1 domain. L-glutamine is bound at residue Gly354. Catalysis depends on Cys381, which acts as the Nucleophile; for glutamine hydrolysis. L-glutamine is bound by residues 382-385 (LGMQ), Glu405, and Arg463. Active-site residues include His508 and Glu510.

Belongs to the CTP synthase family. In terms of assembly, homotetramer.

It catalyses the reaction UTP + L-glutamine + ATP + H2O = CTP + L-glutamate + ADP + phosphate + 2 H(+). It carries out the reaction L-glutamine + H2O = L-glutamate + NH4(+). The enzyme catalyses UTP + NH4(+) + ATP = CTP + ADP + phosphate + 2 H(+). Its pathway is pyrimidine metabolism; CTP biosynthesis via de novo pathway; CTP from UDP: step 2/2. Allosterically activated by GTP, when glutamine is the substrate; GTP has no effect on the reaction when ammonia is the substrate. The allosteric effector GTP functions by stabilizing the protein conformation that binds the tetrahedral intermediate(s) formed during glutamine hydrolysis. Inhibited by the product CTP, via allosteric rather than competitive inhibition. In terms of biological role, catalyzes the ATP-dependent amination of UTP to CTP with either L-glutamine or ammonia as the source of nitrogen. Regulates intracellular CTP levels through interactions with the four ribonucleotide triphosphates. In Lactiplantibacillus plantarum (strain ATCC BAA-793 / NCIMB 8826 / WCFS1) (Lactobacillus plantarum), this protein is CTP synthase.